Reading from the N-terminus, the 484-residue chain is Suppressor of fused homolog (484 aa).

The segment at 1–21 (MAELRPSVAPGPAAPPASGPS) is disordered. Over residues 12 to 21 (PAAPPASGPS) the composition is skewed to pro residues. K257 is covalently cross-linked (Glycyl lysine isopeptide (Lys-Gly) (interchain with G-Cter in ubiquitin)). Positions 279-360 (SRPPEDEEDS…SSTAIIPHEL (82 aa)) are disordered. Phosphoserine is present on S301. K303 carries the post-translational modification N6-acetyllysine. Residue K321 forms a Glycyl lysine isopeptide (Lys-Gly) (interchain with G-Cter in SUMO2) linkage. Basic and acidic residues predominate over residues 336-347 (THDRAPSRKDSL). Residues S342, S346, and S352 each carry the phosphoserine modification. T353 carries the post-translational modification Phosphothreonine. At S481 the chain carries Phosphoserine.

It belongs to the SUFU family. May form homodimers. Interacts with ULK3; inactivating the protein kinase activity of ULK3. Interacts with RAB23. Part of a DNA-bound corepressor complex containing SAP18, GLI1 and SIN3. Part of a complex containing CTNNB1. Binds BTRC, GLI2, GLI3, SAP18 and STK36. Binds both free and DNA-bound GLI1. Interacts with KIF7. Interacts with GLI3FL and this interaction regulates the formation of either repressor or activator forms of GLI3. Its association with GLI3FL is regulated by Hh signaling and dissociation of the SUFU-GLI3 interaction requires the presence of the ciliary motor KIF3A. Polyubiquitinated at Lys-257 by the SCF(FBXL17) complex, leading to its subsequent degradation and allowing the release of GLI1 for proper hedgehog/smoothened signal transduction. Ubiquitination is impaired by phosphorylation at Ser-342, Ser-346, Ser-352 and Thr-353. In terms of processing, phosphorylation at Ser-342, Ser-346, Ser-352 and Thr-353 prevents ubiquitination by the SCF(FBXL17) complex. As to expression, widely expressed in adult and fetal tissues.

The protein localises to the cytoplasm. It is found in the nucleus. In terms of biological role, negative regulator in the hedgehog/smoothened signaling pathway. Down-regulates GLI1-mediated transactivation of target genes. Part of a corepressor complex that acts on DNA-bound GLI1. May also act by linking GLI1 to BTRC and thereby targeting GLI1 to degradation by the proteasome. Sequesters GLI1, GLI2 and GLI3 in the cytoplasm, this effect is overcome by binding of STK36 to both SUFU and a GLI protein. Negative regulator of beta-catenin signaling. Regulates the formation of either the repressor form (GLI3R) or the activator form (GLI3A) of the full-length form of GLI3 (GLI3FL). GLI3FL is complexed with SUFU in the cytoplasm and is maintained in a neutral state. Without the Hh signal, the SUFU-GLI3 complex is recruited to cilia, leading to the efficient processing of GLI3FL into GLI3R. When Hh signaling is initiated, SUFU dissociates from GLI3FL and the latter translocates to the nucleus, where it is phosphorylated, destabilized, and converted to a transcriptional activator (GLI3A). Required for normal embryonic development. Required for the proper formation of hair follicles and the control of epidermal differentiation. This is Suppressor of fused homolog from Mus musculus (Mouse).